Consider the following 423-residue polypeptide: MDKIIVKGGNTRLSGEVVIEGAKNAVLPLLAATILASEGQTTLTNVPILSDVYTMNNVVRGLDIAVDFNEENNTVVVDASGEILDQAPYEYVSKMRASIVVLGPILARNGHAKVSMPGGCTIGSRPIDLHLKGLEAMGAKIIQVGGDITATAEKLKGATIYMDFPSVGATQNLMMAATLADGVTTIENAAREPEIVDLAILLNEMGANVKGAGTEKLVIKGVKSLHGTQHAVIQDRIEAGTFMVAAAMTSGNVLIKDAIWEHNRPLISKLLEMGVDVKEEDRGIRVKSDVSKLKPVAVKTLPHPGFPTDMQAQFTALMAVVKGKSSISETVFENRFQHLEEMRRMGLHSEILRDTAMIHGGLPLQGARVMSTDLRASAALILTGMVAEGTTTVGKLTHLDRGYYKFHEKLAKLGAQISRVSEA.

Residue 23-24 participates in phosphoenolpyruvate binding; that stretch reads KN. Arg96 serves as a coordination point for UDP-N-acetyl-alpha-D-glucosamine. The Proton donor role is filled by Cys120. 2-(S-cysteinyl)pyruvic acid O-phosphothioketal is present on Cys120. Residues 125-129, Asp309, and Val331 each bind UDP-N-acetyl-alpha-D-glucosamine; that span reads RPIDL.

Belongs to the EPSP synthase family. MurA subfamily.

Its subcellular location is the cytoplasm. The enzyme catalyses phosphoenolpyruvate + UDP-N-acetyl-alpha-D-glucosamine = UDP-N-acetyl-3-O-(1-carboxyvinyl)-alpha-D-glucosamine + phosphate. It functions in the pathway cell wall biogenesis; peptidoglycan biosynthesis. Functionally, cell wall formation. Adds enolpyruvyl to UDP-N-acetylglucosamine. The chain is UDP-N-acetylglucosamine 1-carboxyvinyltransferase 1 from Streptococcus thermophilus (strain ATCC BAA-250 / LMG 18311).